The sequence spans 115 residues: Ribonuclease P protein component (115 aa).

It belongs to the RnpA family. As to quaternary structure, consists of a catalytic RNA component (M1 or rnpB) and a protein subunit.

It catalyses the reaction Endonucleolytic cleavage of RNA, removing 5'-extranucleotides from tRNA precursor.. Functionally, RNaseP catalyzes the removal of the 5'-leader sequence from pre-tRNA to produce the mature 5'-terminus. It can also cleave other RNA substrates such as 4.5S RNA. The protein component plays an auxiliary but essential role in vivo by binding to the 5'-leader sequence and broadening the substrate specificity of the ribozyme. This chain is Ribonuclease P protein component, found in Blochmanniella pennsylvanica (strain BPEN).